The chain runs to 555 residues: MNNQAYGVTPPISVANSTPKENELNDSLIKELKSRGSFESETATKKRVEVLNILQSMTEEFVYKVSIKKNISEGMARDVGGKIFTFGSYRLGVYGPGSDIDTLVVVPKHVSRNDFFEVFYELLKGRSELEEIAPVPDAFVPIIKIEFAGISIDLIFARLDIPRVPRDLTLDDKNLLKNIDEKDLRALNGTRVTDEILQLVPKPTVFKHALRCIKMWAQQRAVYGNIFGFPGGVAWAMLVARICQLYPNAVSAVIVEKFFHIYSQWAWPQPVLLKQIEDGPLQVRVWNPRLYALDRQHRMPVITPAYPSMCATHNITSSTQKVILSEFQRGIELMNDINVGKKSWSDLLERHDFFFRYKFYLCIVAATRSTYAEHLKYSGMVESKLRLLVQKLELVEGIELAHPYVKSFENGYYCDNAEEAHEIMNLYGTSKGDDRVKGVLHAENNDNNKENVENKVELHMTKLFIGLKLDLSKEGEKKLDIQYPCAEFFNICKGWQDFDSEKHFIQIKNVKLYDLSDDVYVDGETRPIKIAKRKRAVSKNEGKKKPKSVGTVSAA.

The interval 1-20 (MNNQAYGVTPPISVANSTPK) is disordered. Residues 86-88 (FGS), 99-101 (DID), D153, K214, Y223, and 232-233 (GV) each bind ATP. The Mg(2+) site is built by D99, D101, and D153. The tract at residues 532–555 (KRKRAVSKNEGKKKPKSVGTVSAA) is disordered.

Belongs to the poly(A) polymerase family. It depends on Mg(2+) as a cofactor. Mn(2+) is required as a cofactor.

The protein resides in the nucleus. It carries out the reaction RNA(n) + ATP = RNA(n)-3'-adenine ribonucleotide + diphosphate. Functionally, polymerase that creates the 3'-poly(A) tail of mRNA's. May acquire specificity through interaction with a cleavage and polyadenylation factor. The sequence is that of Poly(A) polymerase PAPa (PAPA) from Candida albicans (strain SC5314 / ATCC MYA-2876) (Yeast).